Consider the following 494-residue polypeptide: Glutamyl-tRNA(Gln) amidotransferase subunit A (494 aa).

Catalysis depends on charge relay system residues Lys79 and Ser154. Ser178 serves as the catalytic Acyl-ester intermediate.

It belongs to the amidase family. GatA subfamily. Heterotrimer of A, B and C subunits.

The catalysed reaction is L-glutamyl-tRNA(Gln) + L-glutamine + ATP + H2O = L-glutaminyl-tRNA(Gln) + L-glutamate + ADP + phosphate + H(+). In terms of biological role, allows the formation of correctly charged Gln-tRNA(Gln) through the transamidation of misacylated Glu-tRNA(Gln) in organisms which lack glutaminyl-tRNA synthetase. The reaction takes place in the presence of glutamine and ATP through an activated gamma-phospho-Glu-tRNA(Gln). The chain is Glutamyl-tRNA(Gln) amidotransferase subunit A from Clostridium kluyveri (strain NBRC 12016).